The sequence spans 357 residues: Glutamate 5-kinase (357 aa).

Lys7 lines the ATP pocket. Residues Ser43, Asp130, and Asn142 each contribute to the substrate site. ATP contacts are provided by residues 162-163 (TD) and 205-211 (TGGMTTK). The region spanning 270–353 (EGELQLDAGA…PVVVHRDGLV (84 aa)) is the PUA domain.

It belongs to the glutamate 5-kinase family.

The protein localises to the cytoplasm. The catalysed reaction is L-glutamate + ATP = L-glutamyl 5-phosphate + ADP. The protein operates within amino-acid biosynthesis; L-proline biosynthesis; L-glutamate 5-semialdehyde from L-glutamate: step 1/2. Functionally, catalyzes the transfer of a phosphate group to glutamate to form L-glutamate 5-phosphate. The polypeptide is Glutamate 5-kinase (Synechococcus sp. (strain CC9605)).